A 378-amino-acid polypeptide reads, in one-letter code: tRNA N(3)-cytidine methyltransferase METTL2B (378 aa).

Residue A2 is modified to N-acetylalanine. Phosphoserine is present on S4. S-adenosyl-L-methionine is bound by residues W78 and Y82. The residue at position 154 (T154) is a Phosphothreonine. S-adenosyl-L-methionine contacts are provided by G188, D213, D239, L240, and I260.

The protein belongs to the methyltransferase superfamily. METL family. As to quaternary structure, monomer. Interacts with DALRD3.

Its subcellular location is the cytoplasm. It catalyses the reaction cytidine(32) in tRNA(Thr) + S-adenosyl-L-methionine = N(3)-methylcytidine(32) in tRNA(Thr) + S-adenosyl-L-homocysteine + H(+). The catalysed reaction is cytidine(32) in tRNA(Arg)(CCU) + S-adenosyl-L-methionine = N(3)-methylcytidine(32) in tRNA(Arg)(CCU) + S-adenosyl-L-homocysteine + H(+). In terms of biological role, S-adenosyl-L-methionine-dependent methyltransferase that mediates N(3)-methylcytidine modification of residue 32 of the tRNA anticodon loop of tRNA(Thr)(UGU) and tRNA(Arg)(CCU). This Homo sapiens (Human) protein is tRNA N(3)-cytidine methyltransferase METTL2B.